Consider the following 315-residue polypeptide: Methionyl-tRNA formyltransferase (315 aa).

Position 117-120 (117-120 (SLLP)) interacts with (6S)-5,6,7,8-tetrahydrofolate.

Belongs to the Fmt family.

The catalysed reaction is L-methionyl-tRNA(fMet) + (6R)-10-formyltetrahydrofolate = N-formyl-L-methionyl-tRNA(fMet) + (6S)-5,6,7,8-tetrahydrofolate + H(+). In terms of biological role, attaches a formyl group to the free amino group of methionyl-tRNA(fMet). The formyl group appears to play a dual role in the initiator identity of N-formylmethionyl-tRNA by promoting its recognition by IF2 and preventing the misappropriation of this tRNA by the elongation apparatus. The protein is Methionyl-tRNA formyltransferase of Methylibium petroleiphilum (strain ATCC BAA-1232 / LMG 22953 / PM1).